The following is a 95-amino-acid chain: Protein TusB (95 aa).

It belongs to the DsrH/TusB family. Heterohexamer, formed by a dimer of trimers. The hexameric TusBCD complex contains 2 copies each of TusB, TusC and TusD. The TusBCD complex interacts with TusE.

The protein localises to the cytoplasm. Functionally, part of a sulfur-relay system required for 2-thiolation of 5-methylaminomethyl-2-thiouridine (mnm(5)s(2)U) at tRNA wobble positions. This is Protein TusB from Pectobacterium carotovorum subsp. carotovorum (strain PC1).